The chain runs to 146 residues: Decarboxylase dmxR15 (146 aa).

One can recognise an EthD domain in the interval proline 31–threonine 126.

Belongs to the tpcK family.

It catalyses the reaction atrochrysone carboxylate + H(+) = atrochrysone + CO2. Its pathway is secondary metabolite biosynthesis. Decarboxylase; part of the gene cluster that mediates the biosynthesis of the dimeric xanthones cryptosporioptides. The pathway begins with the synthesis of atrochrysone thioester by the polyketide synthase dmx-nrPKS. The atrochrysone carboxyl ACP thioesterase dmxR1 then breaks the thioester bond and releases the atrochrysone carboxylic acid from dmx-nrPKS. Atrochrysone carboxylic acid is decarboxylated by the decarboxylase dmxR15, and oxidized by the anthrone oxygenase dmxR16 to yield emodin. Emodin is then reduced to emodin hydroquinone by the oxidoreductase dmxR7. A-ring reduction by the short chain dehydrogenase dmxR18, dehydration by the scytalone dehydratase-like protein dmxR17 and probable spontaneous re-oxidation, results in overall deoxygenation to chrysophanol. Baeyer-Villiger oxidation by the Baeyer-Villiger monooxygenase (BVMO) dmxR6 then yields monodictylactone in equilibrium with monodictyphenone. In the case of the cryptosporioptides biosynthesis, monodictylactone is reduced at C-12 to an alcohol (by the short chain dehydrogenases dmxR12 or dmxR8) and hydroxylated at C-5 by dmxR9, yielding the electron-rich aromatic which could eliminate H(2)O to form the ortho-quinonemethide, followed by tautomerisation to paraquinone and complete the formal reduction to produce the 10-methylgroup. Conjugate addition of C-4a-OH to the resulting paraquinone by the monooxygenase dmxR10 then gives cyclohexadienone, which is then reduced at C-5 by the short chain dehydrogenase dmxR3 to give the dihydroxanthone. The 6,7-epoxide in the cryptosporioptides could be introduced by the cytochrome P450 monooxygenase dmxL3. The highly reducing PKS dmxL2 manufactures butyrate, which is further carboxylated by dmxL1 to form ethylmalonate. It is not yet clear whether the carboxylation occurs while the butyrate is attached to the ACP of dmxL2, but this unusual fungal metabolite could then be esterified to O-5 by the O-acetyltransferase dmxR13. Finally, dimerization performed by dmxR5 gives the observed dimers cryptosporioptides A, B and C as the final products of the pathway. The protein is Decarboxylase dmxR15 of Cryptosporiopsis sp. (strain 8999).